A 286-amino-acid polypeptide reads, in one-letter code: ATP synthase gamma chain (286 aa).

It belongs to the ATPase gamma chain family. F-type ATPases have 2 components, CF(1) - the catalytic core - and CF(0) - the membrane proton channel. CF(1) has five subunits: alpha(3), beta(3), gamma(1), delta(1), epsilon(1). CF(0) has three main subunits: a, b and c.

The protein resides in the cell inner membrane. In terms of biological role, produces ATP from ADP in the presence of a proton gradient across the membrane. The gamma chain is believed to be important in regulating ATPase activity and the flow of protons through the CF(0) complex. This Flavobacterium johnsoniae (strain ATCC 17061 / DSM 2064 / JCM 8514 / BCRC 14874 / CCUG 350202 / NBRC 14942 / NCIMB 11054 / UW101) (Cytophaga johnsonae) protein is ATP synthase gamma chain.